A 391-amino-acid polypeptide reads, in one-letter code: ATPase GET3C (391 aa).

A mitochondrion-targeting transit peptide spans 1–50 (MAALLLLNRVSRSTSSISLHRVAGTLGFNSFNAQIHGDRISGTLFRVRSL). 77-84 (KGGVGKTS) lines the ATP pocket. The active site involves aspartate 106. Asparagine 328 contributes to the ATP binding site.

It belongs to the arsA ATPase family.

It is found in the mitochondrion matrix. It carries out the reaction ATP + H2O = ADP + phosphate + H(+). This is ATPase GET3C from Arabidopsis thaliana (Mouse-ear cress).